The sequence spans 1019 residues: Protein HIRA (1019 aa).

7 WD repeats span residues 11 to 53 (HNGK…KEED), 68 to 107 (NHLA…GPST), 129 to 168 (SHSG…EILA), 172 to 211 (GHSG…LETS), 220 to 263 (GGTT…TNMD), 266 to 322 (GHRK…PLVV), and 326 to 367 (LFDK…DPLS). The interaction with RBBP4 stretch occupies residues 23–443 (PDGTKFATGG…ASMVNGESLE (421 aa)). Low complexity-rich tracts occupy residues 406 to 415 (QRQQQQQAEQ) and 544 to 561 (ATSV…VLTT). 3 disordered regions span residues 406 to 433 (QRQQ…APKV), 513 to 561 (ANSL…VLTT), and 599 to 633 (LKDQ…LSAP). The interaction with HDAC1 stretch occupies residues 444–1019 (DIRKNLLKKQ…TEYQEQLDIL (576 aa)). Positions 599-625 (LKDQNLIKDNKPKDILESSSDSEEKIP) are enriched in basic and acidic residues. The interaction with HDAC2 stretch occupies residues 960-1019 (RLRELCKDLLGPVHYSRGSQWESTVMGLRKRELLKELLPVIGQNLFQRLFTEYQEQLDIL).

Belongs to the WD repeat HIR1 family. In terms of assembly, interacts with ASF1, HDAC1, HDAC2 and RBBP4.

It is found in the nucleus. Its function is as follows. Cooperates with ASF1A to promote replication-independent chromatin assembly. May regulate the transcription of a variety of genes controlling cell growth. The protein is Protein HIRA (HIRA) of Gallus gallus (Chicken).